The sequence spans 354 residues: MIDWITSQGHAIFGGAWTPLWILIRAVLIVVPLLLCVAYLILWERKLIGWMHVRLGPNRVGPLGLLQPIADVLKLLLKEVMTPTHVSKGMYLIAPLMVLMPAVAIWAVIPFQAEVVMADVNAGLLYVMAISSVGVYGVILAGWASNSKYAFLGGMRAAAQMVSYEIAMGFALVTVLMVSGSLNLSAIVNSQNTGYFANMGINVLSWNWIPLLPMFGVYFISGVAETNRHPFDVVEGESEIVAGHMIEYSGMAFALFFLAEYINMIIISTITALLFLGGWAPPFSSFVTNAIPGFFWLLIKVFLLLSVFIWIRASFPRYRYDQIMRLGWKVFIPLTVGWLIIVAIWIKSPWNIWH.

A run of 8 helical transmembrane segments spans residues 22–42 (ILIR…YLIL), 91–111 (YLIA…VIPF), 124–144 (LLYV…AGWA), 168–188 (MGFA…SAIV), 203–223 (VLSW…ISGV), 255–275 (LFFL…ALLF), 291–311 (IPGF…FIWI), and 326–346 (LGWK…AIWI).

The protein belongs to the complex I subunit 1 family. NDH-1 is composed of 14 different subunits. Subunits NuoA, H, J, K, L, M, N constitute the membrane sector of the complex.

It is found in the cell inner membrane. The catalysed reaction is a quinone + NADH + 5 H(+)(in) = a quinol + NAD(+) + 4 H(+)(out). Its function is as follows. NDH-1 shuttles electrons from NADH, via FMN and iron-sulfur (Fe-S) centers, to quinones in the respiratory chain. The immediate electron acceptor for the enzyme in this species is believed to be ubiquinone. Couples the redox reaction to proton translocation (for every two electrons transferred, four hydrogen ions are translocated across the cytoplasmic membrane), and thus conserves the redox energy in a proton gradient. This subunit may bind ubiquinone. The polypeptide is NADH-quinone oxidoreductase subunit H (Cupriavidus pinatubonensis (strain JMP 134 / LMG 1197) (Cupriavidus necator (strain JMP 134))).